A 48-amino-acid chain; its full sequence is ATP synthase protein 8 (48 aa).

Residues 4–24 form a helical membrane-spanning segment; sequence LVPFFFVNQVVYAFVILTVLI.

This sequence belongs to the ATPase protein 8 family. As to quaternary structure, F-type ATPases have 2 components, CF(1) - the catalytic core - and CF(0) - the membrane proton channel.

It is found in the mitochondrion membrane. Functionally, mitochondrial membrane ATP synthase (F(1)F(0) ATP synthase or Complex V) produces ATP from ADP in the presence of a proton gradient across the membrane which is generated by electron transport complexes of the respiratory chain. F-type ATPases consist of two structural domains, F(1) - containing the extramembraneous catalytic core and F(0) - containing the membrane proton channel, linked together by a central stalk and a peripheral stalk. During catalysis, ATP synthesis in the catalytic domain of F(1) is coupled via a rotary mechanism of the central stalk subunits to proton translocation. Part of the complex F(0) domain. Minor subunit located with subunit a in the membrane. This Aspergillus amstelodami protein is ATP synthase protein 8 (atp8).